The primary structure comprises 150 residues: Endoribonuclease YbeY (150 aa).

Residues histidine 113, histidine 117, and histidine 123 each coordinate Zn(2+).

Belongs to the endoribonuclease YbeY family. It depends on Zn(2+) as a cofactor.

It is found in the cytoplasm. Functionally, single strand-specific metallo-endoribonuclease involved in late-stage 70S ribosome quality control and in maturation of the 3' terminus of the 16S rRNA. The sequence is that of Endoribonuclease YbeY from Wolbachia sp. subsp. Drosophila simulans (strain wRi).